We begin with the raw amino-acid sequence, 540 residues long: GMP synthase [glutamine-hydrolyzing] (540 aa).

The Glutamine amidotransferase type-1 domain occupies 29–222 (KILIVDFGSQ…VRKVAGLTGD (194 aa)). The Nucleophile role is filled by Cys-106. Catalysis depends on residues His-196 and Glu-198. In terms of domain architecture, GMPS ATP-PPase spans 223–415 (WTMRAFREEA…LGLPDVFVGR (193 aa)). 250–256 (SGGVDSA) contributes to the ATP binding site.

Homodimer.

The catalysed reaction is XMP + L-glutamine + ATP + H2O = GMP + L-glutamate + AMP + diphosphate + 2 H(+). The protein operates within purine metabolism; GMP biosynthesis; GMP from XMP (L-Gln route): step 1/1. Functionally, catalyzes the synthesis of GMP from XMP. The chain is GMP synthase [glutamine-hydrolyzing] from Rhodopseudomonas palustris (strain ATCC BAA-98 / CGA009).